The chain runs to 160 residues: Putative 4-hydroxy-4-methyl-2-oxoglutarate aldolase (160 aa).

Substrate-binding positions include 76-79 and Arg98; that span reads GGNL. Residue Asp99 participates in a divalent metal cation binding.

This sequence belongs to the class II aldolase/RraA-like family. In terms of assembly, homotrimer. Requires a divalent metal cation as cofactor.

It carries out the reaction 4-hydroxy-4-methyl-2-oxoglutarate = 2 pyruvate. The enzyme catalyses oxaloacetate + H(+) = pyruvate + CO2. In terms of biological role, catalyzes the aldol cleavage of 4-hydroxy-4-methyl-2-oxoglutarate (HMG) into 2 molecules of pyruvate. Also contains a secondary oxaloacetate (OAA) decarboxylase activity due to the common pyruvate enolate transition state formed following C-C bond cleavage in the retro-aldol and decarboxylation reactions. The polypeptide is Putative 4-hydroxy-4-methyl-2-oxoglutarate aldolase (Deinococcus radiodurans (strain ATCC 13939 / DSM 20539 / JCM 16871 / CCUG 27074 / LMG 4051 / NBRC 15346 / NCIMB 9279 / VKM B-1422 / R1)).